The sequence spans 160 residues: Transcription elongation factor GreA (160 aa).

Residues 1–71 (MAEKTYPMTK…GQISTLETQI (71 aa)) are a coiled coil.

The protein belongs to the GreA/GreB family.

In terms of biological role, necessary for efficient RNA polymerase transcription elongation past template-encoded arresting sites. The arresting sites in DNA have the property of trapping a certain fraction of elongating RNA polymerases that pass through, resulting in locked ternary complexes. Cleavage of the nascent transcript by cleavage factors such as GreA or GreB allows the resumption of elongation from the new 3'terminus. GreA releases sequences of 2 to 3 nucleotides. This Streptococcus uberis (strain ATCC BAA-854 / 0140J) protein is Transcription elongation factor GreA.